We begin with the raw amino-acid sequence, 780 residues long: Tripartite terminase subunit 1 (780 aa).

Disordered stretches follow at residues 41 to 66 (RGNA…AGPG), 428 to 447 (GAGA…GDRV), and 452 to 483 (GARG…WGDI). Low complexity predominate over residues 52–63 (ASGAGAAASSEA). Positions 429–439 (AGAGGPKGGAG) are enriched in gly residues. 691 to 698 (FASVYRCG) is a binding site for ATP.

This sequence belongs to the herpesviridae TRM1 protein family. Associates with TRM2 and TRM3 to form the tripartite terminase complex. Interacts with portal protein.

The protein localises to the host nucleus. Functionally, component of the molecular motor that translocates viral genomic DNA in empty capsid during DNA packaging. Forms a tripartite terminase complex together with TRM2 and TRM3 in the host cytoplasm. Once the complex reaches the host nucleus, it interacts with the capsid portal vertex. This portal forms a ring in which genomic DNA is translocated into the capsid. TRM1 carries an endonuclease activity that plays an important role for the cleavage of concatemeric viral DNA into unit length genomes. The protein is Tripartite terminase subunit 1 of Homo sapiens (Human).